A 165-amino-acid polypeptide reads, in one-letter code: Phosphopantetheine adenylyltransferase (165 aa).

Position 10 (Ser10) interacts with substrate. Residues 10–11 (SF) and His18 contribute to the ATP site. Substrate is bound by residues Lys42, Ser79, and Arg93. ATP is bound by residues 94-96 (GLR), Glu104, and 129-135 (VRPITAT).

It belongs to the bacterial CoaD family. As to quaternary structure, homohexamer. It depends on Mg(2+) as a cofactor.

The protein resides in the cytoplasm. The catalysed reaction is (R)-4'-phosphopantetheine + ATP + H(+) = 3'-dephospho-CoA + diphosphate. It participates in cofactor biosynthesis; coenzyme A biosynthesis; CoA from (R)-pantothenate: step 4/5. Functionally, reversibly transfers an adenylyl group from ATP to 4'-phosphopantetheine, yielding dephospho-CoA (dPCoA) and pyrophosphate. This Bradyrhizobium diazoefficiens (strain JCM 10833 / BCRC 13528 / IAM 13628 / NBRC 14792 / USDA 110) protein is Phosphopantetheine adenylyltransferase.